Consider the following 205-residue polypeptide: Small ribosomal subunit protein uS4 (205 aa).

Residues 20-46 (WGRSKSPVNRREYGPGQHGQRRKGKLS) form a disordered region. The 64-residue stretch at 94–157 (RRLDAVVYRA…RQLTLVLEAS (64 aa)) folds into the S4 RNA-binding domain.

Belongs to the universal ribosomal protein uS4 family. In terms of assembly, part of the 30S ribosomal subunit. Contacts protein S5. The interaction surface between S4 and S5 is involved in control of translational fidelity.

In terms of biological role, one of the primary rRNA binding proteins, it binds directly to 16S rRNA where it nucleates assembly of the body of the 30S subunit. With S5 and S12 plays an important role in translational accuracy. This Beijerinckia indica subsp. indica (strain ATCC 9039 / DSM 1715 / NCIMB 8712) protein is Small ribosomal subunit protein uS4.